The following is a 364-amino-acid chain: Bifunctional protein Rv2228c (364 aa).

Positions 1–139 (MKVVIEADGG…MDAAAQSAAA (139 aa)) constitute an RNase H type-1 domain. Positions 8, 49, 73, and 123 each coordinate Mg(2+). His-172 acts as the Tele-phosphohistidine intermediate in catalysis. The active-site Proton donor/acceptor; for phosphatase activity is the Glu-246.

In the N-terminal section; belongs to the RNase H family. The protein in the C-terminal section; belongs to the histidine phosphatase superfamily. The N-terminal domain alone is monomeric in solution but associates in the crystal to form a dimer. Requires Mg(2+) as cofactor.

The catalysed reaction is Endonucleolytic cleavage to 5'-phosphomonoester.. It carries out the reaction adenosylcob(III)alamin 5'-phosphate + H2O = adenosylcob(III)alamin + phosphate. The enzyme catalyses alpha-ribazole 5'-phosphate + H2O = alpha-ribazole + phosphate. The protein operates within nucleoside biosynthesis; alpha-ribazole biosynthesis; alpha-ribazole from 5,6-dimethylbenzimidazole: step 2/2. Its function is as follows. Endonuclease that displays both RNase H activity with a hybrid RNA/DNA substrate as well as double-stranded RNase activity. As the only authenticated RNase HI in M.tuberculosis, probably plays an important role in the physiology of this organism, being likely involved in bacterial replication. Functionally, catalyzes the hydrolysis of the phospho group from alpha-ribazole 5'-phosphate to form alpha-ribazole. May also catalyze the conversion of adenosylcobalamin 5'-phosphate to adenosylcobalamin (vitamin B12). Has a possible role in B12 recycling, but the primary role of the C-terminal domain of this phosphatase enzyme could be phosphate generation to help bacterial survival within the macrophage, which is a phosphate-deprived environment. The sequence is that of Bifunctional protein Rv2228c from Mycobacterium tuberculosis (strain ATCC 25618 / H37Rv).